The sequence spans 597 residues: Phosphoinositide phosphatase SAC7 (597 aa).

The SAC domain occupies 130–458 (LSVAEKTTGL…GDEISIQYSG (329 aa)). Residues 393-404 (RSNCIDCLDRTN) carry the Phosphatase catalytic core motif. Helical transmembrane passes span 528-548 (AVANFPVALFVVLMSFWFATM) and 559-579 (HKHLFFSLLWTGICVGMAALV).

As to expression, ubiquitous.

Its subcellular location is the endoplasmic reticulum membrane. It is found in the cytoplasmic vesicle membrane. Functionally, phosphoinositide phosphatase that preferentially hydrolyzes PtdIns(4)P. Regulates the accumulation of PtdIns(4)P on membrane compartments at the tips of growing root hairs leading to proper root hair development. In Arabidopsis thaliana (Mouse-ear cress), this protein is Phosphoinositide phosphatase SAC7 (SAC7).